The primary structure comprises 298 residues: GTPase Era (298 aa).

Residues 7–174 (RSGFVSIIGR…VELVRKALPQ (168 aa)) form the Era-type G domain. Residues 15 to 22 (GRPNVGKS) form a G1 region. 15–22 (GRPNVGKS) lines the GTP pocket. The tract at residues 41–45 (QTTRN) is G2. Positions 62 to 65 (DTPG) are G3. Residues 62–66 (DTPGI) and 124–127 (NKVD) each bind GTP. The G4 stretch occupies residues 124–127 (NKVD). The interval 153–155 (ISA) is G5. Residues 205-283 (TRDEVPYATA…FLELFVRVRK (79 aa)) form the KH type-2 domain.

The protein belongs to the TRAFAC class TrmE-Era-EngA-EngB-Septin-like GTPase superfamily. Era GTPase family. In terms of assembly, monomer.

It localises to the cytoplasm. The protein resides in the cell inner membrane. An essential GTPase that binds both GDP and GTP, with rapid nucleotide exchange. Plays a role in 16S rRNA processing and 30S ribosomal subunit biogenesis and possibly also in cell cycle regulation and energy metabolism. The sequence is that of GTPase Era from Geobacter metallireducens (strain ATCC 53774 / DSM 7210 / GS-15).